The sequence spans 133 residues: L-cystatin (133 aa).

An N-terminal signal peptide occupies residues 1 to 19; that stretch reads MEGYNILAVLIILVGVSMG. At glutamine 20 the chain carries Pyrrolidone carboxylic acid. The short motif at 67 to 71 is the Secondary area of contact element; sequence QVVSG. Disulfide bonds link cysteine 85–cysteine 98 and cysteine 109–cysteine 129.

The protein belongs to the cystatin family. Expressed in hemocytes and slightly in heart.

The protein resides in the cytoplasmic granule. Functionally, tight-binding inhibitor for papain. It has an important role in the protection of cells, antimicrobial activity against Gram-negative bacteria, defense against invading microbes, and response to external stimuli. This is L-cystatin from Tachypleus tridentatus (Japanese horseshoe crab).